The primary structure comprises 344 residues: Krueppel-like factor 3 (344 aa).

The segment at Met-1–Ala-74 is repressor domain. Lys-10 is covalently cross-linked (Glycyl lysine isopeptide (Lys-Gly) (interchain with G-Cter in SUMO)). A 9aaTAD; inactive motif is present at residues Glu-60–Lys-68. A CTBP-binding motif motif is present at residues Pro-61–Thr-65. The disordered stretch occupies residues Val-66 to Pro-111. Residue Lys-68 forms a Glycyl lysine isopeptide (Lys-Gly) (interchain with G-Cter in SUMO2) linkage. Composition is skewed to low complexity over residues Gly-70–Ser-81 and Ser-91–Ser-107. A phosphoserine mark is found at Ser-71, Ser-91, Ser-100, Ser-107, and Ser-110. A Glycyl lysine isopeptide (Lys-Gly) (interchain with G-Cter in SUMO2) cross-link involves residue Lys-195. Residue Lys-197 forms a Glycyl lysine isopeptide (Lys-Gly) (interchain with G-Cter in SUMO); alternate linkage. Lys-197 participates in a covalent cross-link: Glycyl lysine isopeptide (Lys-Gly) (interchain with G-Cter in SUMO2); alternate. 3 positions are modified to phosphoserine: Ser-215, Ser-223, and Ser-249. The segment at Ser-235–Arg-254 is disordered. 3 C2H2-type zinc fingers span residues His-259–His-283, Tyr-289–His-313, and Phe-319–His-341.

This sequence belongs to the krueppel C2H2-type zinc-finger protein family. In terms of assembly, monomer. In terms of processing, sumoylated with SUMO1. Sumoylation is enhanced by PIAS1, PIAS2alpha and PIAS2beta, and PIAS4, but not by Pc2. Enhances transcriptional repression, but has no effect on DNA binding. Sumoylation on Lys-197 is the major site. In 8.5 day embryos, expressed in midbrain, anterior hindbrain and ventral forebrain. In 9 day embryos, expressed throughout ventral anterior half of embryo including midbrain-hindbrain junction, ventral midbrain, diencephalon and forebrain. At 10.5 days, distribution is more widespread with expression also found in developing limb buds. Widely expressed in the adult.

Its subcellular location is the nucleus. Its function is as follows. Binds to the CACCC box of erythroid cell-expressed genes. May play a role in hematopoiesis. The protein is Krueppel-like factor 3 (Klf3) of Mus musculus (Mouse).